The following is a 561-amino-acid chain: Mercuric reductase (561 aa).

One can recognise an HMA domain in the interval 2–65 (THLKITGMTC…AVAGLGYKAT (64 aa)). Positions 11 and 14 each coordinate a metal cation. FAD is bound by residues A110, G130, and T135. A disulfide bridge links C136 with C141. FAD contacts are provided by K145, A211, D403, and V411. Hg(2+)-binding residues include C558 and C559.

It belongs to the class-I pyridine nucleotide-disulfide oxidoreductase family. Homodimer. It depends on FAD as a cofactor.

It catalyses the reaction Hg + NADP(+) + H(+) = Hg(2+) + NADPH. Its function is as follows. Resistance to Hg(2+) in bacteria appears to be governed by a specialized system which includes mercuric reductase. MerA protein is responsible for volatilizing mercury as Hg(0). Plays a pivotal role in mercury resistance under thiol-depleted conditions and cell protection. Protects cells under thiol-depleted conditions. The chain is Mercuric reductase (merA) from Pseudomonas aeruginosa.